A 442-amino-acid polypeptide reads, in one-letter code: tRNA-2-methylthio-N(6)-dimethylallyladenosine synthase (442 aa).

Positions 2 to 117 constitute an MTTase N-terminal domain; the sequence is KSLYIKTYGC…LPELIVKASR (116 aa). [4Fe-4S] cluster-binding residues include Cys-11, Cys-47, Cys-80, Cys-157, Cys-161, and Cys-164. The Radical SAM core domain occupies 143–374; that stretch reads NSQGSSAFLS…QKLINKQQLE (232 aa). A TRAM domain is found at 377–441; sequence QSMVGKTIPV…QNSLLGRELQ (65 aa).

The protein belongs to the methylthiotransferase family. MiaB subfamily. As to quaternary structure, monomer. Requires [4Fe-4S] cluster as cofactor.

The protein localises to the cytoplasm. The enzyme catalyses N(6)-dimethylallyladenosine(37) in tRNA + (sulfur carrier)-SH + AH2 + 2 S-adenosyl-L-methionine = 2-methylsulfanyl-N(6)-dimethylallyladenosine(37) in tRNA + (sulfur carrier)-H + 5'-deoxyadenosine + L-methionine + A + S-adenosyl-L-homocysteine + 2 H(+). Functionally, catalyzes the methylthiolation of N6-(dimethylallyl)adenosine (i(6)A), leading to the formation of 2-methylthio-N6-(dimethylallyl)adenosine (ms(2)i(6)A) at position 37 in tRNAs that read codons beginning with uridine. In Wolbachia sp. subsp. Brugia malayi (strain TRS), this protein is tRNA-2-methylthio-N(6)-dimethylallyladenosine synthase.